Consider the following 338-residue polypeptide: D-erythrose-4-phosphate dehydrogenase (338 aa).

11–12 provides a ligand contact to NAD(+); it reads RI. Residues 153–155, R199, 212–213, and R235 contribute to the substrate site; these read SCT and TK. The active-site Nucleophile is the C154. N317 provides a ligand contact to NAD(+).

The protein belongs to the glyceraldehyde-3-phosphate dehydrogenase family. Epd subfamily. As to quaternary structure, homotetramer.

Its subcellular location is the cytoplasm. The catalysed reaction is D-erythrose 4-phosphate + NAD(+) + H2O = 4-phospho-D-erythronate + NADH + 2 H(+). It functions in the pathway cofactor biosynthesis; pyridoxine 5'-phosphate biosynthesis; pyridoxine 5'-phosphate from D-erythrose 4-phosphate: step 1/5. Its function is as follows. Catalyzes the NAD-dependent conversion of D-erythrose 4-phosphate to 4-phosphoerythronate. This chain is D-erythrose-4-phosphate dehydrogenase, found in Shewanella oneidensis (strain ATCC 700550 / JCM 31522 / CIP 106686 / LMG 19005 / NCIMB 14063 / MR-1).